The chain runs to 143 residues: Small ribosomal subunit protein bS6 (143 aa).

A disordered region spans residues 100–143 (SPIIKMKDERREVVELTTSGSEDNQKDHHKEDLDKKTDEFSEEN). Basic and acidic residues-rich tracts occupy residues 104-113 (KMKDERREVV) and 122-143 (DNQKDHHKEDLDKKTDEFSEEN).

Belongs to the bacterial ribosomal protein bS6 family.

In terms of biological role, binds together with bS18 to 16S ribosomal RNA. This chain is Small ribosomal subunit protein bS6, found in Hamiltonella defensa subsp. Acyrthosiphon pisum (strain 5AT).